The chain runs to 183 residues: Streptavidin-V2 (183 aa).

Residues 1–24 (MRKIVVAAIAVSLTTVGITASASA) form the signal peptide. Residues 37 to 159 (AEAGITGTWY…GHDTFTKVKP (123 aa)) form the Avidin-like domain. 2 residues coordinate biotin: tyrosine 67 and tyrosine 78. The short motif at 83-85 (RYD) is the Cell attachment site; atypical element. 3 residues coordinate biotin: tryptophan 116, tryptophan 132, and tryptophan 144.

Belongs to the avidin/streptavidin family. In terms of assembly, homotetramer.

The protein localises to the secreted. Its function is as follows. The biological function of streptavidin is not known. Forms a strong non-covalent specific complex with biotin (one molecule of biotin per subunit of streptavidin). This Streptomyces violaceus (Streptomyces venezuelae) protein is Streptavidin-V2.